Reading from the N-terminus, the 187-residue chain is MPGKLIWLVGPSGSGKDSLLAALRQREHPQLLVAHRYITRPFNAGSENHIALSEHEFFTRAEQHLFALSWHANNTYYGIGVEIDLWLHAGFDVVANGSRAHLALARERYGEVLVPICLAVSPPVLRQRLEQRGRENALEIAQRLDRAARYKPDNCLTLNNDGSLRQSVDEFFRLLRSHAAREADQLV.

10-17 (GPSGSGKD) provides a ligand contact to ATP.

This sequence belongs to the ribose 1,5-bisphosphokinase family.

It catalyses the reaction alpha-D-ribose 1,5-bisphosphate + ATP = 5-phospho-alpha-D-ribose 1-diphosphate + ADP. It participates in metabolic intermediate biosynthesis; 5-phospho-alpha-D-ribose 1-diphosphate biosynthesis; 5-phospho-alpha-D-ribose 1-diphosphate from D-ribose 5-phosphate (route II): step 3/3. Functionally, catalyzes the phosphorylation of ribose 1,5-bisphosphate to 5-phospho-D-ribosyl alpha-1-diphosphate (PRPP). This Klebsiella pneumoniae subsp. pneumoniae (strain ATCC 700721 / MGH 78578) protein is Ribose 1,5-bisphosphate phosphokinase PhnN.